The chain runs to 157 residues: Protein-export protein SecB (157 aa).

It belongs to the SecB family. As to quaternary structure, homotetramer, a dimer of dimers. One homotetramer interacts with 1 SecA dimer.

It localises to the cytoplasm. One of the proteins required for the normal export of preproteins out of the cell cytoplasm. It is a molecular chaperone that binds to a subset of precursor proteins, maintaining them in a translocation-competent state. It also specifically binds to its receptor SecA. This chain is Protein-export protein SecB, found in Shewanella frigidimarina (strain NCIMB 400).